The following is a 292-amino-acid chain: MEVQSLTITTNYPPKPASPNPQDIRDTIRSNKTNENLWIQRKDVDTTLRSALEHLKACCIVLNLSAKCDERLNVAVSHGTTEKYQLMSRTGSSDNLKAAVTLLDDNVIQAEVTVKYPKAGGGYYRAVAQPDVQWKLQQLQDLGNHISRVTITLCDLQHEVNLLKGDGERDAFTLATGARILEELKLTMNEISLARNSIMLPRKRSLLELCYFPPTRKFVPPLPQDQLISFYISCCRLVCASYQMVPKTVHPQGLSVFMAESQLPHLDDVIKHLNTVMAILQKLINYLSATMS.

Residues 1–12 (MEVQSLTITTNY) are compositionally biased toward polar residues. The tract at residues 1–25 (MEVQSLTITTNYPPKPASPNPQDIR) is disordered.

This sequence belongs to the rogdi family.

The protein localises to the nucleus envelope. In Caenorhabditis elegans, this protein is Protein rogdi homolog.